A 104-amino-acid polypeptide reads, in one-letter code: Large ribosomal subunit protein uL24 (104 aa).

This sequence belongs to the universal ribosomal protein uL24 family. Part of the 50S ribosomal subunit.

Its function is as follows. One of two assembly initiator proteins, it binds directly to the 5'-end of the 23S rRNA, where it nucleates assembly of the 50S subunit. In terms of biological role, one of the proteins that surrounds the polypeptide exit tunnel on the outside of the subunit. This is Large ribosomal subunit protein uL24 from Bradyrhizobium sp. (strain BTAi1 / ATCC BAA-1182).